The chain runs to 148 residues: Deoxyuridine 5'-triphosphate nucleotidohydrolase (148 aa).

Substrate contacts are provided by residues 68 to 70, N81, 85 to 87, and K95; these read RSG and TID.

This sequence belongs to the dUTPase family. It depends on Mg(2+) as a cofactor.

The enzyme catalyses dUTP + H2O = dUMP + diphosphate + H(+). Its pathway is pyrimidine metabolism; dUMP biosynthesis; dUMP from dCTP (dUTP route): step 2/2. This enzyme is involved in nucleotide metabolism: it produces dUMP, the immediate precursor of thymidine nucleotides and it decreases the intracellular concentration of dUTP so that uracil cannot be incorporated into DNA. The polypeptide is Deoxyuridine 5'-triphosphate nucleotidohydrolase (Rickettsia felis (strain ATCC VR-1525 / URRWXCal2) (Rickettsia azadi)).